The following is a 290-amino-acid chain: Lipoyl synthase (290 aa).

The [4Fe-4S] cluster site is built by cysteine 38, cysteine 43, cysteine 49, cysteine 64, cysteine 68, cysteine 71, and serine 277. The 217-residue stretch at 50-266 (WSKGTATFLL…REIALDAGFR (217 aa)) folds into the Radical SAM core domain.

It belongs to the radical SAM superfamily. Lipoyl synthase family. It depends on [4Fe-4S] cluster as a cofactor.

Its subcellular location is the cytoplasm. It catalyses the reaction [[Fe-S] cluster scaffold protein carrying a second [4Fe-4S](2+) cluster] + N(6)-octanoyl-L-lysyl-[protein] + 2 oxidized [2Fe-2S]-[ferredoxin] + 2 S-adenosyl-L-methionine + 4 H(+) = [[Fe-S] cluster scaffold protein] + N(6)-[(R)-dihydrolipoyl]-L-lysyl-[protein] + 4 Fe(3+) + 2 hydrogen sulfide + 2 5'-deoxyadenosine + 2 L-methionine + 2 reduced [2Fe-2S]-[ferredoxin]. The protein operates within protein modification; protein lipoylation via endogenous pathway; protein N(6)-(lipoyl)lysine from octanoyl-[acyl-carrier-protein]: step 2/2. Its function is as follows. Catalyzes the radical-mediated insertion of two sulfur atoms into the C-6 and C-8 positions of the octanoyl moiety bound to the lipoyl domains of lipoate-dependent enzymes, thereby converting the octanoylated domains into lipoylated derivatives. The protein is Lipoyl synthase of Chlorobaculum tepidum (strain ATCC 49652 / DSM 12025 / NBRC 103806 / TLS) (Chlorobium tepidum).